Reading from the N-terminus, the 122-residue chain is Large ribosomal subunit protein uL29A (122 aa).

The stretch at 10 to 69 forms a coiled coil; sequence QLGIKQIEERAAEIKADLAALRQKKNSGDVGANDIKTAKKNLARALTVRREKILEELVEA.

The protein belongs to the universal ribosomal protein uL29 family. Component of the large ribosomal subunit.

Its subcellular location is the cytoplasm. The sequence is that of Large ribosomal subunit protein uL29A (RPL35A) from Encephalitozoon cuniculi (strain GB-M1) (Microsporidian parasite).